A 127-amino-acid chain; its full sequence is Apolipoprotein C-IV (127 aa).

Positions methionine 1–cysteine 27 are cleaved as a signal peptide. Residue asparagine 63 is glycosylated (N-linked (GlcNAc...) asparagine).

This sequence belongs to the apolipoprotein C4 family. In terms of tissue distribution, expressed by the liver and secreted in plasma.

The protein localises to the secreted. May participate in lipoprotein metabolism. This Homo sapiens (Human) protein is Apolipoprotein C-IV (APOC4).